The following is a 101-amino-acid chain: UPF0473 protein LAF_0524 (101 aa).

This sequence belongs to the UPF0473 family.

The protein is UPF0473 protein LAF_0524 of Limosilactobacillus fermentum (strain NBRC 3956 / LMG 18251) (Lactobacillus fermentum).